The chain runs to 658 residues: MYLTLIVLPLLGSISSGFFGRKIGVSGSHIITCSSVILTTLLALLAFIEVGINNIPVTIDVARWIDAEALNVMWSFKFDSLTVSMLIPVLIVSSLVHIYSISYMSHDPHNQRFFSYLSLFTFMMIILVTGNNYLLMFVGWEGVGICSYLLINFWFTRIAANQSSISALLTNRVGDCFLTIGIFAMLWSFGNIDYNLIFSLAPYYNENIITMIGICLVIGATAKSSQVGLHIWLPQAMEGPTPVSALIHAATMVTAGVYLLMRSSPLIEYSSTVLIICLWLGAITTVFSSLIGLFQQDIKKVIAYSTMSQLGMMVIGIGLSSYNIALFHLVNHAFYKALLFLGAGAVIHSVADNQDFRKYGGLRPFLPLTYSVMLIASLSLVAVPFMTGFYSKDLILESAYGQFYLSGTIVYFIATIGAMFTTLYSAKVLYLTFLTNPNGPLNNYKYAHEGDLFLNIPLIILAVFSIFFGFLTKDIFIGLGTGFFSDNSLFIHPNHEILLDTEFAVPVLFKLLPFFFTISLSILSILYSEFTPNLLINFKFSTLGYNIFSFFNQRFYIELLYNKYIVENILTLGGQTTKSLDKGSVEYLGPYGLEKGLLNLSNSINNLSTGVVTTYALYILMGLMFYISTLYFFNWDSNLLILIIFSLFVILNNKLLQK.

A run of 17 helical transmembrane segments spans residues 4-23 (TLIVLPLLGSISSGFFGRKI), 30-52 (IITCSSVILTTLLALLAFIEVGI), 81-103 (LTVSMLIPVLIVSSLVHIYSISY), 112-129 (RFFSYLSLFTFMMIILVT), 133-155 (YLLMFVGWEGVGICSYLLINFWF), 168-190 (LLTNRVGDCFLTIGIFAMLWSFG), 200-222 (LAPYYNENIITMIGICLVIGATA), 243-262 (VSALIHAATMVTAGVYLLMR), 272-294 (TVLIICLWLGAITTVFSSLIGLF), 301-319 (VIAYSTMSQLGMMVIGIGL), 329-351 (LVNHAFYKALLFLGAGAVIHSVA), 364-386 (PFLPLTYSVMLIASLSLVAVPFM), 409-431 (IVYFIATIGAMFTTLYSAKVLYL), 452-471 (LFLNIPLIILAVFSIFFGFL), 505-527 (VPVLFKLLPFFFTISLSILSILY), 607-629 (LSTGVVTTYALYILMGLMFYIST), and 639-656 (LLILIIFSLFVILNNKLL).

This sequence belongs to the complex I subunit 5 family.

The protein localises to the mitochondrion inner membrane. The catalysed reaction is a ubiquinone + NADH + 5 H(+)(in) = a ubiquinol + NAD(+) + 4 H(+)(out). In terms of biological role, core subunit of the mitochondrial membrane respiratory chain NADH dehydrogenase (Complex I) that is believed to belong to the minimal assembly required for catalysis. Complex I functions in the transfer of electrons from NADH to the respiratory chain. The immediate electron acceptor for the enzyme is believed to be ubiquinone. The chain is NADH-ubiquinone oxidoreductase chain 5 (nad5) from Talaromyces marneffei (Penicillium marneffei).